The sequence spans 540 residues: Cytochrome P450 monooxygenase CYP3 (540 aa).

N-linked (GlcNAc...) asparagine glycosylation is present at Asn-2. A helical membrane pass occupies residues 26–46; that stretch reads IFGLSSSTLVVLVAMIAVSTL. Residues Asn-100, Asn-210, and Asn-400 are each glycosylated (N-linked (GlcNAc...) asparagine). Cys-471 serves as a coordination point for heme.

The protein belongs to the cytochrome P450 family. It depends on heme as a cofactor.

It is found in the membrane. It functions in the pathway secondary metabolite biosynthesis. Cytochrome P450 monooxygenase; part of the gene cluster that mediates the biosynthesis of itaconic acid and 2-hydroxyparaconate. Cis-aconitate is secreted by the mitochondrial tricarboxylate transporter MTT1. In the cytosol cis-aconitate is converted into trans-aconitate via isomerization by the aconitate-delta-isomerase ADI1. Decarboxylation of trans-aconitate by the trans-aconitate decarboxylase TAD1 then leads then to the production of itaconic acid. The cytochrome P450 monooxygenase CYP3 further converts itaconate to 2-hydroxyparaconate via oxidation of the double bond, leading to a transient epoxide, which can subsequently be lactonized to produce 2-hydroxyparaconate. Secretion of itaconate and possibly 2-hydroxyparaconate into the medium is mediated by the major facilitator ITP1. The glyoxalase domain-containing protein RDO1 is not involved in the biosynthesis of itaconate and 2-hydroxyparaconate, however, it might play a role in the further conversion of 2-hydroxyparaconate to itatartarate. The protein is Cytochrome P450 monooxygenase CYP3 of Mycosarcoma maydis (Corn smut fungus).